The following is a 334-amino-acid chain: Galactinol synthase 4 (334 aa).

Lys-104 is a catalytic residue. Mn(2+) is bound by residues Asp-120, Asp-122, and His-258.

This sequence belongs to the glycosyltransferase 8 family. Galactosyltransferase subfamily. A divalent metal cation is required as a cofactor.

Its subcellular location is the cytoplasm. It carries out the reaction myo-inositol + UDP-alpha-D-galactose = alpha-D-galactosyl-(1-&gt;3)-1D-myo-inositol + UDP + H(+). Its function is as follows. Galactinol synthase involved in the biosynthesis of raffinose family oligosaccharides (RFOs) that function as osmoprotectants. May promote plant stress tolerance. In Arabidopsis thaliana (Mouse-ear cress), this protein is Galactinol synthase 4 (GOLS4).